The sequence spans 86 residues: Putative pro-MCH-like protein 1 (86 aa).

The tract at residues 31–49 (GSVAFPAENGVQDTESTQE) is NGE-like. Residues 38–62 (ENGVQDTESTQEKRETGDEENSAKF) form a disordered region. Residues 52–64 (ETGDEENSAKFPV) are NEI-like. The interval 68–86 (DFDTLSCMLGRVYQSCWQV) is melanin-concentrating hormone-like.

It belongs to the melanin-concentrating hormone family. Expressed in testis and brain.

The chain is Putative pro-MCH-like protein 1 (PMCHL1) from Homo sapiens (Human).